Here is a 350-residue protein sequence, read N- to C-terminus: MIKKAIARIVEQKDLTEGEMIEVMGQIMTGEATPAQIGAFITALRMKGETIDEITGAARVMREHATRIRAGKDLLDIDRDDINIDRETILDVVGTGGDGTNTFNVSTTVAFVVSACGVKVAKHGNRSVSSLCGSADVLEKLGVNLDITPETVEQCITKIGIGFLFAPALHGAMRYAIGPRREIGIRTIFNILGPLTNPAGADCQVMGVYRPGLVEKLAGVLHRLGCRHGFVVHGMDGMDEITTTTETLIAEVTTSGVSICTIHPEELGFSRCSMDELRGGDATANADIVRSVLQGVAGPRRDIVLINAAYALVAADRAATPEQAIALAAEAIDSGRAMEQLRKLIQITKD.

5-phospho-alpha-D-ribose 1-diphosphate-binding positions include Gly-94, 97–98 (GD), Thr-102, 104–107 (NVST), 122–130 (KHGNRSVSS), and Ser-134. Residue Gly-94 coordinates anthranilate. Mg(2+) is bound at residue Ser-106. Asn-125 lines the anthranilate pocket. Arg-180 provides a ligand contact to anthranilate. Positions 239 and 240 each coordinate Mg(2+).

Belongs to the anthranilate phosphoribosyltransferase family. As to quaternary structure, homodimer. Mg(2+) is required as a cofactor.

It catalyses the reaction N-(5-phospho-beta-D-ribosyl)anthranilate + diphosphate = 5-phospho-alpha-D-ribose 1-diphosphate + anthranilate. It functions in the pathway amino-acid biosynthesis; L-tryptophan biosynthesis; L-tryptophan from chorismate: step 2/5. Functionally, catalyzes the transfer of the phosphoribosyl group of 5-phosphorylribose-1-pyrophosphate (PRPP) to anthranilate to yield N-(5'-phosphoribosyl)-anthranilate (PRA). The protein is Anthranilate phosphoribosyltransferase of Pelobacter propionicus (strain DSM 2379 / NBRC 103807 / OttBd1).